Reading from the N-terminus, the 598-residue chain is Elongation factor 4 (598 aa).

The tr-type G domain maps to 2-184; that stretch reads NNIRNFAIIA…AIVAKLPAPQ (183 aa). GTP contacts are provided by residues 14 to 19 and 131 to 134; these read DHGKST and NKVD.

Belongs to the TRAFAC class translation factor GTPase superfamily. Classic translation factor GTPase family. LepA subfamily.

The protein localises to the cell membrane. The catalysed reaction is GTP + H2O = GDP + phosphate + H(+). In terms of biological role, required for accurate and efficient protein synthesis under certain stress conditions. May act as a fidelity factor of the translation reaction, by catalyzing a one-codon backward translocation of tRNAs on improperly translocated ribosomes. Back-translocation proceeds from a post-translocation (POST) complex to a pre-translocation (PRE) complex, thus giving elongation factor G a second chance to translocate the tRNAs correctly. Binds to ribosomes in a GTP-dependent manner. The polypeptide is Elongation factor 4 (Wolbachia sp. subsp. Drosophila simulans (strain wRi)).